We begin with the raw amino-acid sequence, 199 residues long: Recombination protein RecR (199 aa).

The C4-type zinc finger occupies 57–72 (CEICGNLDTKSICHIC). One can recognise a Toprim domain in the interval 80–175 (STIAIVETVA…KISRLASGIP (96 aa)).

The protein belongs to the RecR family.

Its function is as follows. May play a role in DNA repair. It seems to be involved in an RecBC-independent recombinational process of DNA repair. It may act with RecF and RecO. In Rickettsia prowazekii (strain Madrid E), this protein is Recombination protein RecR.